A 430-amino-acid polypeptide reads, in one-letter code: Dihydroorotase (430 aa).

The Zn(2+) site is built by His-57 and His-59. Residues 59-61 (HLR) and Asn-91 contribute to the substrate site. Zn(2+) is bound by residues Asp-151, His-178, and His-231. Position 277 (Asn-277) interacts with substrate. Asp-304 is a Zn(2+) binding site. Asp-304 is an active-site residue. Substrate is bound by residues His-308 and 322 to 323 (PG).

The protein belongs to the metallo-dependent hydrolases superfamily. DHOase family. Class I DHOase subfamily. It depends on Zn(2+) as a cofactor.

It carries out the reaction (S)-dihydroorotate + H2O = N-carbamoyl-L-aspartate + H(+). The protein operates within pyrimidine metabolism; UMP biosynthesis via de novo pathway; (S)-dihydroorotate from bicarbonate: step 3/3. Catalyzes the reversible cyclization of carbamoyl aspartate to dihydroorotate. This chain is Dihydroorotase, found in Mycobacterium bovis (strain ATCC BAA-935 / AF2122/97).